The sequence spans 670 residues: Microtubule-associated protein ssm4 (670 aa).

Residues 23-65 (GSTDFESGIWLGVELLNGKGKNDGSVKGKRYFSCEKGKGIFVR) form the CAP-Gly domain. 2 coiled-coil regions span residues 209–254 (KSEL…KNSI) and 404–582 (VKTR…KLAD). The residue at position 460 (S460) is a Phosphoserine. T606 is subject to Phosphothreonine.

The protein localises to the cytoplasm. It localises to the cytoskeleton. The protein resides in the spindle. Its function is as follows. Binds to nuclear microtubules with the effect of either modifying their structure or function. This then promotes meiotic nuclear division. This is Microtubule-associated protein ssm4 (ssm4) from Schizosaccharomyces pombe (strain 972 / ATCC 24843) (Fission yeast).